A 441-amino-acid polypeptide reads, in one-letter code: POC1 centriolar protein homolog A (441 aa).

WD repeat units lie at residues 16–55 (GHRD…RAYR), 58–97 (GHKD…ESTA), 100–139 (AHTG…FLFS), 142–181 (QHIN…CIQS), 184–223 (EHGG…LIQH), 226–265 (VHSG…LLYT), and 268–307 (GHQG…GSYP). Positions 347-376 (DLEPHITEMSVKDRSSPLSYTSRSVDQHHP) are disordered. Residues 348–361 (LEPHITEMSVKDRS) show a composition bias toward basic and acidic residues. The stretch at 400-427 (LTRTVGILEQRLSLTEDKLKECIEQQQA) forms a coiled coil.

Belongs to the WD repeat POC1 family. As to quaternary structure, interacts with pat.

It localises to the cytoplasm. The protein localises to the cytoskeleton. Functionally, may play an important role in centriole assembly and/or stability and ciliogenesis. The polypeptide is POC1 centriolar protein homolog A (poc1a) (Xenopus laevis (African clawed frog)).